A 1218-amino-acid chain; its full sequence is Protein jagged-1 (1218 aa).

Residues 1-33 (MRSPRTRGRSGRPLSLLLALLCALRAKVCGASG) form the signal peptide. The Extracellular portion of the chain corresponds to 34–1067 (QFELEILSMQ…QRRPLKNRTD (1034 aa)). Asn-143 carries N-linked (GlcNAc...) asparagine glycosylation. Residues 185 to 229 (VTCDDYYYGFGCNKFCRPRDDFFGHYACDQNGNKTCMEGWMGPEC) enclose the DSL domain. Intrachain disulfides connect Cys-187-Cys-196 and Cys-200-Cys-212. The tract at residues 199–207 (FCRPRDDFF) is important for interaction with NOTCH1. An N-linked (GlcNAc...) asparagine glycan is attached at Asn-217. 40 disulfide bridges follow: Cys-220/Cys-229, Cys-234/Cys-245, Cys-238/Cys-251, Cys-253/Cys-262, Cys-265/Cys-276, Cys-271/Cys-282, Cys-284/Cys-293, Cys-300/Cys-312, Cys-306/Cys-322, Cys-324/Cys-333, Cys-340/Cys-351, Cys-345/Cys-360, Cys-362/Cys-371, Cys-378/Cys-389, Cys-383/Cys-398, Cys-400/Cys-409, Cys-416/Cys-427, Cys-421/Cys-436, Cys-438/Cys-447, Cys-454/Cys-464, Cys-458/Cys-473, Cys-475/Cys-484, Cys-491/Cys-502, Cys-496/Cys-511, Cys-513/Cys-522, Cys-529/Cys-540, Cys-534/Cys-549, Cys-551/Cys-560, Cys-578/Cys-605, Cys-599/Cys-615, Cys-617/Cys-626, Cys-633/Cys-644, Cys-638/Cys-653, Cys-655/Cys-664, Cys-671/Cys-682, Cys-676/Cys-691, Cys-693/Cys-702, Cys-709/Cys-720, Cys-714/Cys-729, and Cys-731/Cys-740. Residues 230–263 (NRAICRQGCSPKHGSCKLPGDCRCQYGWQGLYCD) enclose the EGF-like 1 domain. Residues 264–294 (KCIPHPGCVHGICNEPWQCLCETNWGGQLCD) form the EGF-like 2; atypical domain. 2 EGF-like domains span residues 296 to 334 (DLNY…PNCE) and 336 to 372 (AEHA…PTCS). In terms of domain architecture, EGF-like 5; calcium-binding spans 374–410 (NIDDCSPNNCSHGGTCQDLVNGFKCVCPPQWTGKTCQ). The N-linked (GlcNAc...) asparagine glycan is linked to Asn-382. In terms of domain architecture, EGF-like 6; calcium-binding spans 412 to 448 (DANECEAKPCVNAKSCKNLIASYYCDCLPGWMGQNCD). One can recognise an EGF-like 7; calcium-binding domain in the interval 450 to 485 (NINDCLGQCQNDASCRDLVNGYRCICPPGYAGDHCE). Residues 487-523 (DIDECASNPCLNGGHCQNEINRFQCLCPTGFSGNLCQ) form the EGF-like 8; calcium-binding domain. 2 EGF-like domains span residues 525–561 (DIDY…KNCS) and 586–627 (DTPE…TYCH). Asn-559 is a glycosylation site (N-linked (GlcNAc...) asparagine). The EGF-like 11; calcium-binding domain maps to 629 to 665 (NINDCESNPCRNGGTCIDGVNSYKCICSDGWEGAYCE). The 37-residue stretch at 667-703 (NINDCSQNPCHNGGTCRDLVNDFYCDCKNGWKGKTCH) folds into the EGF-like 12; calcium-binding domain. EGF-like domains follow at residues 705–741 (RDSQ…TTCN) and 744–780 (RNSS…PICA). A glycan (N-linked (GlcNAc...) asparagine) is linked at Asn-745. 9 disulfides stabilise this stretch: Cys-748/Cys-759, Cys-753/Cys-768, Cys-770/Cys-779, Cys-786/Cys-797, Cys-791/Cys-806, Cys-808/Cys-817, Cys-824/Cys-835, Cys-829/Cys-844, and Cys-846/Cys-855. Positions 782–818 (NTNDCSPHPCYNSGTCVDGDNWYRCECAPGFAGPDCR) constitute an EGF-like 15; calcium-binding domain. The EGF-like 16; calcium-binding domain maps to 820-856 (NINECQSSPCAFGATCVDEINGYRCVCPPGHSGAKCQ). N-linked (GlcNAc...) asparagine glycans are attached at residues Asn-960, Asn-991, Asn-1045, and Asn-1064. The helical transmembrane segment at 1068–1093 (FLVPLLSSVLTVAWICCLVTAFYWCL) threads the bilayer. Over 1094 to 1218 (RKRRKPGSHT…QSLNRMEYIV (125 aa)) the chain is Cytoplasmic. A disordered region spans residues 1152-1218 (HNSEVEEDDM…QSLNRMEYIV (67 aa)). Polar residues predominate over residues 1189-1199 (TPTKHPNWTNK).

In terms of assembly, interacts with NOTCH2 and NOTCH3. Interacts with NOTCH1 (in the presence of calcium ions). In terms of tissue distribution, widely expressed in adult and fetal tissues. In cervix epithelium expressed in undifferentiated subcolumnar reserve cells and squamous metaplasia. Expression is up-regulated in cervical squamous cell carcinoma. Expressed in bone marrow cell line HS-27a which supports the long-term maintenance of immature progenitor cells.

It localises to the membrane. The protein resides in the cell membrane. Functionally, ligand for multiple Notch receptors and involved in the mediation of Notch signaling. May be involved in cell-fate decisions during hematopoiesis. Seems to be involved in early and late stages of mammalian cardiovascular development. Inhibits myoblast differentiation. Enhances fibroblast growth factor-induced angiogenesis (in vitro). The sequence is that of Protein jagged-1 (JAG1) from Homo sapiens (Human).